The sequence spans 293 residues: Formamidopyrimidine-DNA glycosylase (293 aa).

The Schiff-base intermediate with DNA role is filled by P2. The active-site Proton donor is E3. K58 (proton donor; for beta-elimination activity) is an active-site residue. H104, R123, and R166 together coordinate DNA. The segment at 257 to 293 (AVYDREGEPCRSKGCDGVVKRFVQNGRSTFWCPKCQK) adopts an FPG-type zinc-finger fold. Catalysis depends on R283, which acts as the Proton donor; for delta-elimination activity.

It belongs to the FPG family. Monomer. Zn(2+) is required as a cofactor.

The enzyme catalyses Hydrolysis of DNA containing ring-opened 7-methylguanine residues, releasing 2,6-diamino-4-hydroxy-5-(N-methyl)formamidopyrimidine.. The catalysed reaction is 2'-deoxyribonucleotide-(2'-deoxyribose 5'-phosphate)-2'-deoxyribonucleotide-DNA = a 3'-end 2'-deoxyribonucleotide-(2,3-dehydro-2,3-deoxyribose 5'-phosphate)-DNA + a 5'-end 5'-phospho-2'-deoxyribonucleoside-DNA + H(+). Functionally, involved in base excision repair of DNA damaged by oxidation or by mutagenic agents. Acts as a DNA glycosylase that recognizes and removes damaged bases. Has a preference for oxidized purines, such as 7,8-dihydro-8-oxoguanine (8-oxoG). Has AP (apurinic/apyrimidinic) lyase activity and introduces nicks in the DNA strand. Cleaves the DNA backbone by beta-delta elimination to generate a single-strand break at the site of the removed base with both 3'- and 5'-phosphates. The polypeptide is Formamidopyrimidine-DNA glycosylase (Rhodopseudomonas palustris (strain BisB18)).